Consider the following 229-residue polypeptide: Chromophore lyase CpcT/CpeT 1 (229 aa).

The protein belongs to the CpcT/CpeT biliprotein lyase family.

Functionally, covalently attaches a chromophore to Cys residue(s) of phycobiliproteins. The chain is Chromophore lyase CpcT/CpeT 1 from Gloeobacter violaceus (strain ATCC 29082 / PCC 7421).